Reading from the N-terminus, the 553-residue chain is Dihydroxy-acid dehydratase 1 (553 aa).

Mg(2+) is bound at residue Asp-78. Cys-119 is a [2Fe-2S] cluster binding site. Positions 120 and 121 each coordinate Mg(2+). Lys-121 carries the post-translational modification N6-carboxylysine. Cys-191 contacts [2Fe-2S] cluster. Mg(2+) is bound at residue Glu-444. Catalysis depends on Ser-470, which acts as the Proton acceptor.

It belongs to the IlvD/Edd family. Homodimer. It depends on [2Fe-2S] cluster as a cofactor. Requires Mg(2+) as cofactor.

It catalyses the reaction (2R)-2,3-dihydroxy-3-methylbutanoate = 3-methyl-2-oxobutanoate + H2O. The enzyme catalyses (2R,3R)-2,3-dihydroxy-3-methylpentanoate = (S)-3-methyl-2-oxopentanoate + H2O. It participates in amino-acid biosynthesis; L-isoleucine biosynthesis; L-isoleucine from 2-oxobutanoate: step 3/4. It functions in the pathway amino-acid biosynthesis; L-valine biosynthesis; L-valine from pyruvate: step 3/4. Functionally, functions in the biosynthesis of branched-chain amino acids. Catalyzes the dehydration of (2R,3R)-2,3-dihydroxy-3-methylpentanoate (2,3-dihydroxy-3-methylvalerate) into 2-oxo-3-methylpentanoate (2-oxo-3-methylvalerate) and of (2R)-2,3-dihydroxy-3-methylbutanoate (2,3-dihydroxyisovalerate) into 2-oxo-3-methylbutanoate (2-oxoisovalerate), the penultimate precursor to L-isoleucine and L-valine, respectively. This chain is Dihydroxy-acid dehydratase 1, found in Methanosarcina acetivorans (strain ATCC 35395 / DSM 2834 / JCM 12185 / C2A).